The primary structure comprises 214 residues: Thymidylate kinase (214 aa).

An ATP-binding site is contributed by 10–17 (GPDGAGKT).

This sequence belongs to the thymidylate kinase family.

It catalyses the reaction dTMP + ATP = dTDP + ADP. In terms of biological role, phosphorylation of dTMP to form dTDP in both de novo and salvage pathways of dTTP synthesis. This is Thymidylate kinase from Lacticaseibacillus casei (strain BL23) (Lactobacillus casei).